We begin with the raw amino-acid sequence, 351 residues long: Probable protein phosphatase 2C 8 (351 aa).

The tract at residues 1–63 is disordered; the sequence is MLEKESDLTA…REAEEDKPSF (63 aa). The span at 54 to 63 shows a compositional bias: basic and acidic residues; that stretch reads REAEEDKPSF. The region spanning 74–348 is the PPM-type phosphatase domain; it reads EADVAEDKGA…DNCTAIVIVF (275 aa). Mn(2+)-binding residues include D114, G115, D295, and D339.

Belongs to the PP2C family. Mg(2+) serves as cofactor. Mn(2+) is required as a cofactor.

The catalysed reaction is O-phospho-L-seryl-[protein] + H2O = L-seryl-[protein] + phosphate. It catalyses the reaction O-phospho-L-threonyl-[protein] + H2O = L-threonyl-[protein] + phosphate. The polypeptide is Probable protein phosphatase 2C 8 (Arabidopsis thaliana (Mouse-ear cress)).